The sequence spans 263 residues: MEKDVEIGIFGGTGIYDSGLLEDAKEVDIDTPYGKPSDTITVGTFKGRKIAFLPRHGKKHTIPPHMINFKANIWAFKELGVTRIIAPSAVGSLKEELAPGHFVLPTQFLDFTKSRDGSFSEDGRVIHISVADPFCPELQSSITEVTDSLDMNIHKDCTYVCIEGPRFSTKAESKFYRTTGADIIGMTLVPECQLAREAQICYASISTVTDYDVWAEKPVTAKEVLETLSKNVEGTKKILTELIEKIPKDRSCSCAKALEEAEF.

Residues threonine 13, 55–56 (RH), and 88–89 (SA) contribute to the phosphate site. Methionine 186 provides a ligand contact to substrate. Threonine 187 serves as a coordination point for phosphate. 210-212 (DYD) contacts substrate.

The protein belongs to the PNP/MTAP phosphorylase family. MTAP subfamily. In terms of assembly, homohexamer. Dimer of a homotrimer.

It catalyses the reaction S-methyl-5'-thioadenosine + phosphate = 5-(methylsulfanyl)-alpha-D-ribose 1-phosphate + adenine. Its pathway is amino-acid biosynthesis; L-methionine biosynthesis via salvage pathway; S-methyl-5-thio-alpha-D-ribose 1-phosphate from S-methyl-5'-thioadenosine (phosphorylase route): step 1/1. Its function is as follows. Catalyzes the reversible phosphorylation of S-methyl-5'-thioadenosine (MTA) to adenine and 5-methylthioribose-1-phosphate. Involved in the breakdown of MTA, a major by-product of polyamine biosynthesis. Responsible for the first step in the methionine salvage pathway after MTA has been generated from S-adenosylmethionine. Has broad substrate specificity with 6-aminopurine nucleosides as preferred substrates. This chain is S-methyl-5'-thioadenosine phosphorylase, found in Nitrosopumilus maritimus (strain SCM1).